The chain runs to 745 residues: Probable copper-transporting ATPase PacS (745 aa).

The Cytoplasmic segment spans residues 1 to 94 (MAQTINLQLE…PVFSAKLVTG (94 aa)). One can recognise an HMA domain in the interval 3-68 (QTINLQLEGM…AVERAGYHAR (66 aa)). 2 residues coordinate a metal cation: cysteine 14 and cysteine 17. The helical transmembrane segment at 95–115 (LVISAVLFFGSLPMMLGVNIP) threads the bilayer. Over 116-125 (HFPHIFHDPW) the chain is Extracellular. The chain crosses the membrane as a helical span at residues 126–145 (LQWLLATPVQFWSGAEFYRG). Residues 146–152 (AWKSVRT) lie on the Cytoplasmic side of the membrane. The chain crosses the membrane as a helical span at residues 153-173 (RSATMDTLVALGTSAAYFYSV). At 174 to 193 (AITLFPQWLTSQGLAAHVYF) the chain is on the extracellular side. A helical membrane pass occupies residues 194 to 214 (EAAAVVITLILLGRSLEQRAR). Residues 215–342 (RETSAAIRKL…KAPIQHFVDR (128 aa)) lie on the Cytoplasmic side of the membrane. Residues 343–365 (ITHWFVPTVIVVAIAAFCIWWLT) form a helical membrane-spanning segment. Topologically, residues 366–372 (TGNITLA) are extracellular. A helical membrane pass occupies residues 373–390 (VLTLVEVLIIACPCALGL). Over 391–543 (ATPTSVMVGT…QAQQWEKEQK (153 aa)) the chain is Cytoplasmic. Aspartate 428 functions as the 4-aspartylphosphate intermediate in the catalytic mechanism. The chain crosses the membrane as a helical span at residues 544–564 (TVIWLAVDTEVKALLAIADAI). Over 565-687 (KPSSPQVVQA…KLSRATMGNI (123 aa)) the chain is Extracellular. Positions 633 and 637 each coordinate Mg(2+). The chain crosses the membrane as a helical span at residues 688 to 707 (RQNLFFAFIYNVIGIPVAAG). Over 708–719 (LFYPLFGLLLNP) the chain is Cytoplasmic. The chain crosses the membrane as a helical span at residues 720–738 (ILAGAAMAFSSVSVVTNAL). Residues 739 to 745 (RLKKFCP) lie on the Extracellular side of the membrane.

This sequence belongs to the cation transport ATPase (P-type) (TC 3.A.3) family. Type IB subfamily.

Its subcellular location is the cell membrane. It carries out the reaction Cu(+)(in) + ATP + H2O = Cu(+)(out) + ADP + phosphate + H(+). Functionally, may play a role in the osmotic adaptation. This Synechocystis sp. (strain ATCC 27184 / PCC 6803 / Kazusa) protein is Probable copper-transporting ATPase PacS (pacS).